An 865-amino-acid polypeptide reads, in one-letter code: MTRYNPREAEPKWQSAWDACDAFKAIGPSASNNKPKYYVLEMFPYPSGRIHVGHSRNYTMGDVVARYKRARGFDVLHPMGWDAFGLPAENAARDRGVHPGAWTHDNIDAMRGQLQRLGLALDWSREIATCDPSYYRHQQAIFLRLMERGLLHRKTAKVNWDPVDQTVLANEQVIDGRGWRSGALVVQRELDQWFFKITEYADELTDALEELDRWPDKVRTMQSNWIGRSRGAEVSFPLTDSGLAEQFGATIDVFTTRPDTLFGASFLALAPDHPIVKALAADDPEIDRFMHECARMGTTAEEIEKAPKRGVDLGITVRHPFDENWELPVWSANFVLSGYGTGAIFGSPAGDQRDLDFARKYDLAVQPVVLPPEASADTHVIEDEAYTGPGTSYNSRFLDGLSTADALERAITELEARKLGKGATSYRLRDWLVSRQRYWGCPIPVIHCADCGVVPVPEDQLPVVLPEDVTFDHPSNPLERHPTWKNADCPKCGKAGRRETDTLDTFVCSSWYFLRFTSPWSEDTPFLASDAEHWMPVDQYVGGIEHAILHLLYARFFTRALNDAGLMNMKSGEPFAGLFTQGMVTHETYKSADGKWLSPEEVDLRKDGAVEMSTGKPVSVGAIEKMSKSKKNVVDLDAFIESYGADAVRWFVLSDSPPERDVEYTDSGVEGVWRFVQRLWSTVTSLPEGAPGPLTVAADASGPALEIRRAAHKALHAVTDAIEGFRFNSAVAQVHDLVNVLRKYVPSDDAGIAAKTEALGILARIIAPFVPHLAEECWEHLGGEGLVIDAAWPEADPALLVEDSVTLPVQVNGKRRTEVTAPKGAAQDVVQEMVMADQTVQRALEGLTVRKVIVVPDRIVNIVAG.

A 'HIGH' region motif is present at residues 44 to 54 (PYPSGRIHVGH). The 'KMSKS' region signature appears at 625-629 (KMSKS). An ATP-binding site is contributed by lysine 628.

The protein belongs to the class-I aminoacyl-tRNA synthetase family.

The protein localises to the cytoplasm. The enzyme catalyses tRNA(Leu) + L-leucine + ATP = L-leucyl-tRNA(Leu) + AMP + diphosphate. This chain is Leucine--tRNA ligase, found in Maricaulis maris (strain MCS10) (Caulobacter maris).